We begin with the raw amino-acid sequence, 235 residues long: Calcium-activated potassium channel subunit beta-2 (235 aa).

The tract at residues 1–45 (MFIWTSGRTSSSYRQDEKRNIYQKIRDHDLLDKRKTVTALKAGED) is ball and chain. Topologically, residues 1–46 (MFIWTSGRTSSSYRQDEKRNIYQKIRDHDLLDKRKTVTALKAGEDR) are cytoplasmic. Residues 47 to 67 (AILLGLAMMVCSIMMYFLLGI) traverse the membrane as a helical segment. Topologically, residues 68 to 194 (TLLRSYMQSV…VILTKLYSSN (127 aa)) are extracellular. N-linked (GlcNAc...) asparagine glycans are attached at residues Asn88, Asn96, and Asn119. A helical transmembrane segment spans residues 195 to 215 (VLFHSLFWPTCMMAGGVAIVA). Over 216–235 (MVKLTQYLSLLCERIQRINR) the chain is Cytoplasmic.

Belongs to the KCNMB (TC 8.A.14.1) family. KCNMB2 subfamily. In terms of assembly, interacts with KCNMA1 tetramer. There are probably 4 molecules of KCMNB2 per KCNMA1 tetramer. In terms of processing, N-glycosylated.

The protein resides in the membrane. Regulatory subunit of the calcium activated potassium KCNMA1 (maxiK) channel. Modulates the calcium sensitivity and gating kinetics of KCNMA1, thereby contributing to KCNMA1 channel diversity. Acts as a negative regulator that confers rapid and complete inactivation of KCNMA1 channel complex. The polypeptide is Calcium-activated potassium channel subunit beta-2 (Kcnmb2) (Mus musculus (Mouse)).